The chain runs to 208 residues: Holliday junction resolvase RecU (208 aa).

Positions 1–25 are disordered; sequence MNYPNGKPFNRNKTKVGRTNDHKSS. Mg(2+)-binding residues include Thr-87, Asp-89, Glu-102, and Gln-121.

It belongs to the RecU family. Mg(2+) is required as a cofactor.

The protein resides in the cytoplasm. The enzyme catalyses Endonucleolytic cleavage at a junction such as a reciprocal single-stranded crossover between two homologous DNA duplexes (Holliday junction).. In terms of biological role, endonuclease that resolves Holliday junction intermediates in genetic recombination. Cleaves mobile four-strand junctions by introducing symmetrical nicks in paired strands. Promotes annealing of linear ssDNA with homologous dsDNA. Required for DNA repair, homologous recombination and chromosome segregation. The chain is Holliday junction resolvase RecU from Staphylococcus carnosus (strain TM300).